Here is a 727-residue protein sequence, read N- to C-terminus: Centrosomal protein kizuna (727 aa).

Residues 1 to 20 (MTERSGRGGGTRGASALPSP) form a disordered region. Residues 77 to 124 (KNARIRNQEYLKQFERIQANITASLEKLQELKIEFETQIKKMQLLSKD) adopt a coiled-coil conformation. Disordered stretches follow at residues 176–226 (DFTT…NKSD), 271–456 (EGKK…FTNL), and 564–727 (RLAV…PRTP). A compositionally biased stretch (polar residues) spans 198–223 (HQQTAQSSDVTGSRVVQTPGDTQCLN). Over residues 286-324 (LSPENRTTDLKCDSSRRSEGSEGEILTREHIEVEEERAR) the composition is skewed to basic and acidic residues. S328 carries the post-translational modification Phosphoserine. The segment covering 343-359 (PQEKPPARKASSDHLPC) has biased composition (basic and acidic residues). A compositionally biased stretch (low complexity) spans 380-390 (LSSSSDLTVSV). T387 is modified (phosphothreonine; by PLK1). The segment covering 442 to 455 (APSTPDSPNESFTN) has biased composition (polar residues). Over residues 569 to 583 (SSKSSCSLPSTPSDE) the composition is skewed to low complexity. Over residues 603 to 613 (QEDESREESTE) the composition is skewed to acidic residues. Polar residues predominate over residues 631–642 (LKQSALQGSTHQ). 2 stretches are compositionally biased toward low complexity: residues 659 to 669 (GLKTGSGTFKT) and 677 to 689 (SEAS…GSPL). Phosphoserine is present on residues S711, S714, and S716.

The protein belongs to the kizuna family. As to quaternary structure, interacts with AKAP9, CEP72, ODF2, PCNT and TUBGCP2. Post-translationally, phosphorylation at Thr-387 by PLK1 is not needed for centrosomal localization or pericentriolar material expansion but is indispensable for spindle-pole stabilization.

The protein resides in the cytoplasm. Its subcellular location is the cytoskeleton. It localises to the microtubule organizing center. The protein localises to the centrosome. It is found in the cilium basal body. In terms of biological role, centrosomal protein required for establishing a robust mitotic centrosome architecture that can endure the forces that converge on the centrosomes during spindle formation. Required for stabilizing the expanded pericentriolar material around the centriole. The sequence is that of Centrosomal protein kizuna (KIZ) from Bos taurus (Bovine).